A 365-amino-acid polypeptide reads, in one-letter code: Sulfate/thiosulfate import ATP-binding protein CysA (365 aa).

One can recognise an ABC transporter domain in the interval 3–237; it reads IEIANIKKSF…PATRFVLEFM (235 aa). ATP is bound at residue 35–42; it reads GPSGSGKT.

The protein belongs to the ABC transporter superfamily. Sulfate/tungstate importer (TC 3.A.1.6) family. In terms of assembly, the complex is composed of two ATP-binding proteins (CysA), two transmembrane proteins (CysT and CysW) and a solute-binding protein (CysP).

The protein resides in the cell inner membrane. It carries out the reaction sulfate(out) + ATP + H2O = sulfate(in) + ADP + phosphate + H(+). The catalysed reaction is thiosulfate(out) + ATP + H2O = thiosulfate(in) + ADP + phosphate + H(+). Functionally, part of the ABC transporter complex CysAWTP involved in sulfate/thiosulfate import. Responsible for energy coupling to the transport system. In Escherichia coli O6:H1 (strain CFT073 / ATCC 700928 / UPEC), this protein is Sulfate/thiosulfate import ATP-binding protein CysA.